The sequence spans 213 residues: Octanoyltransferase (213 aa).

The 176-residue stretch at 32-207 (DSTLDEIWLV…NILALLNNPD (176 aa)) folds into the BPL/LPL catalytic domain. Residues 71-78 (RGGQVTYH), 138-140 (SLG), and 151-153 (GLA) contribute to the substrate site. The Acyl-thioester intermediate role is filled by cysteine 169.

It belongs to the LipB family.

The protein localises to the cytoplasm. It catalyses the reaction octanoyl-[ACP] + L-lysyl-[protein] = N(6)-octanoyl-L-lysyl-[protein] + holo-[ACP] + H(+). Its pathway is protein modification; protein lipoylation via endogenous pathway; protein N(6)-(lipoyl)lysine from octanoyl-[acyl-carrier-protein]: step 1/2. In terms of biological role, catalyzes the transfer of endogenously produced octanoic acid from octanoyl-acyl-carrier-protein onto the lipoyl domains of lipoate-dependent enzymes. Lipoyl-ACP can also act as a substrate although octanoyl-ACP is likely to be the physiological substrate. The sequence is that of Octanoyltransferase from Escherichia coli O8 (strain IAI1).